The primary structure comprises 505 residues: UDP-N-acetylglucosamine diphosphorylase 1 (505 aa).

Basic and acidic residues predominate over residues 1 to 10 (MIEPSMEREN). A disordered region spans residues 1–32 (MIEPSMERENGALTAATTTTTAVTSPPPMASS). Residues 14 to 24 (TAATTTTTAVT) show a composition bias toward low complexity. The Substrate binding motif lies at 134–137 (LSGG). A substrate-binding site is contributed by Asn253. Residues 335–336 (EY) carry the Substrate binding motif. A substrate-binding site is contributed by Lys432.

Belongs to the UDPGP type 1 family. In terms of assembly, monomer. Mg(2+) serves as cofactor. It depends on Mn(2+) as a cofactor. In terms of tissue distribution, expressed in root tips, stipules and mature pollen grains.

It catalyses the reaction N-acetyl-alpha-D-glucosamine 1-phosphate + UTP + H(+) = UDP-N-acetyl-alpha-D-glucosamine + diphosphate. The enzyme catalyses N-acetyl-alpha-D-galactosamine 1-phosphate + UTP + H(+) = UDP-N-acetyl-alpha-D-galactosamine + diphosphate. The protein operates within nucleotide-sugar biosynthesis; UDP-N-acetyl-alpha-D-glucosamine biosynthesis; UDP-N-acetyl-alpha-D-glucosamine from N-acetyl-alpha-D-glucosamine 1-phosphate: step 1/1. Its activity is regulated as follows. Inhibited by hygromycin and streptomycin, but not by gentamycin or kanamycin. Functionally, uridylyltransferase involved in the biosynthesis of UDP-glucosamine, an essential precursor for glycoprotein and glycolipid synthesis. Can use both UDP-glucosamine and the 4-epimer UDP-galactosamine as substrates, but no other sugars or NTPs. Acts redundantly with GLCNAC1PUT2. Required for gametogenesis and embryo development. This Arabidopsis thaliana (Mouse-ear cress) protein is UDP-N-acetylglucosamine diphosphorylase 1 (GLCNAC1PUT1).